Reading from the N-terminus, the 97-residue chain is uncharacterized protein (97 aa).

This is an uncharacterized protein from Escherichia coli (Bacteriophage T4).